A 952-amino-acid polypeptide reads, in one-letter code: Protein translocase subunit SecA (952 aa).

ATP-binding positions include Gln135, 153-157 (GEGKT), and Asp575. Positions 907–921 (AAPAAAIPGVSAKAA) are enriched in low complexity. Residues 907 to 946 (AAPAAAIPGVSAKAATQSTTPAAKEIGRNDPCPCGSGKKY) form a disordered region. Zn(2+) is bound by residues Cys938, Cys940, Cys949, and Cys950.

It belongs to the SecA family. As to quaternary structure, monomer and homodimer. Part of the essential Sec protein translocation apparatus which comprises SecA, SecYEG and auxiliary proteins SecDF. Other proteins may also be involved. It depends on Zn(2+) as a cofactor.

Its subcellular location is the cell membrane. It is found in the cytoplasm. The catalysed reaction is ATP + H2O + cellular proteinSide 1 = ADP + phosphate + cellular proteinSide 2.. In terms of biological role, part of the Sec protein translocase complex. Interacts with the SecYEG preprotein conducting channel. Has a central role in coupling the hydrolysis of ATP to the transfer of proteins into and across the cell membrane, serving as an ATP-driven molecular motor driving the stepwise translocation of polypeptide chains across the membrane. In Dehalococcoides mccartyi (strain CBDB1), this protein is Protein translocase subunit SecA.